Reading from the N-terminus, the 1279-residue chain is Maestro heat-like repeat-containing protein family member 7 (1279 aa).

The interval 1 to 145 is disordered; it reads MALSRGTSLI…NSSRPCSEDV (145 aa). Positions 39–61 are enriched in low complexity; sequence PDLALAPPPEHALALTPALHPAL. Polar residues-rich tracts occupy residues 71–106 and 124–140; these read PVSN…NHTS and PSST…SSRP. 5 N-linked (GlcNAc...) asparagine glycosylation sites follow: Asn-200, Asn-210, Asn-255, Asn-267, and Asn-296. Ser-356 carries the post-translational modification Phosphoserine. N-linked (GlcNAc...) asparagine glycosylation is present at Asn-541. 2 helical membrane-spanning segments follow: residues 548–568 and 722–742; these read TLVT…LLLG and LLPI…ALLM. 4 HEAT repeats span residues 913–950, 992–1029, 1035–1072, and 1080–1117; these read QELC…MEQV, AKVQ…GQGK, AVYV…KLQT, and EQLT…FMNW.

The protein resides in the membrane. This chain is Maestro heat-like repeat-containing protein family member 7 (Mroh7), found in Mus musculus (Mouse).